The sequence spans 562 residues: MAARPQQPPMEMPDLSNAIVAQDEMGRPFIIVKDQGNKKRQHGLEAKKSHILAARSVASIIKTSLGPRGLDKILISPDGEITITNDGATILSQMELDNEIAKLLVQLSKSQDDEIGDGTTGVVVLASALLDQALELIQKGIHPIKIANGFDEAAKLAISKLEETCDDISASNDELFRDFLLRAAKTSLGSKIVSKDHDRFAEMAVEAVINVMDKDRKDVDFDLIKMQGRVGGSISDSKLINGVILDKDFSHPQMPKCVLPKEGSDGVKLAILTCPFEPPKPKTKHKLDISSVEEYQKLQTYEQDKFKEMIDDVKKAGADVVICQWGFDDEANHLLLQNDLPAVRWVGGQELEHIAISTNGRIVPRFQDLSKDKLGTCSRIYEQEFGTTKDRMLIIEQSKETKTVTCFVRGSNKMIVDEAERALHDSLCVVRNLVKDSRVVYGGGAAEVTMSLAVSEEADKQRGIDQYAFRGFAQALDTIPMTLAENSGLDPIGTLSTLKSKQLKEKISNIGVDCLGYGSNDMKELFVVDPFIGKKQQILLATQLCRMILKIDNVIISGKDEY.

This sequence belongs to the TCP-1 chaperonin family. Heterooligomeric complex of about 850 to 900 kDa that forms two stacked rings, 12 to 16 nm in diameter.

The protein resides in the cytoplasm. Functionally, molecular chaperone; assists the folding of proteins upon ATP hydrolysis. Known to play a role, in vitro, in the folding of actin and tubulin. In yeast may play a role in mitotic spindle formation. The sequence is that of T-complex protein 1 subunit epsilon (CCT5) from Saccharomyces cerevisiae (strain ATCC 204508 / S288c) (Baker's yeast).